The following is a 359-amino-acid chain: Nicotinate-nucleotide--dimethylbenzimidazole phosphoribosyltransferase (359 aa).

The Proton acceptor role is filled by glutamate 318.

Belongs to the CobT family. Homodimer.

It carries out the reaction 5,6-dimethylbenzimidazole + nicotinate beta-D-ribonucleotide = alpha-ribazole 5'-phosphate + nicotinate + H(+). The protein operates within nucleoside biosynthesis; alpha-ribazole biosynthesis; alpha-ribazole from 5,6-dimethylbenzimidazole: step 1/2. Functionally, catalyzes the synthesis of alpha-ribazole-5'-phosphate from nicotinate mononucleotide (NAMN) and 5,6-dimethylbenzimidazole (DMB). In Escherichia coli O157:H7, this protein is Nicotinate-nucleotide--dimethylbenzimidazole phosphoribosyltransferase.